The following is a 295-amino-acid chain: Iron-sulfur cluster carrier protein (295 aa).

38–45 contacts ATP; that stretch reads GKGGVGKS.

This sequence belongs to the Mrp/NBP35 ATP-binding proteins family. In terms of assembly, homodimer.

In terms of biological role, binds and transfers iron-sulfur (Fe-S) clusters to target apoproteins. Can hydrolyze ATP. The chain is Iron-sulfur cluster carrier protein from Pyrococcus furiosus (strain ATCC 43587 / DSM 3638 / JCM 8422 / Vc1).